A 606-amino-acid chain; its full sequence is UvrABC system protein C (606 aa).

One can recognise a GIY-YIG domain in the interval 19-97 (QSCGVYQMIG…IKSLKPPYNI (79 aa)). Residues 207 to 242 (EKVKKQLSSTMEKCSKEENYELAAIYRDRLKFLEQI) form the UVR domain.

The protein belongs to the UvrC family. In terms of assembly, interacts with UvrB in an incision complex.

Its subcellular location is the cytoplasm. The UvrABC repair system catalyzes the recognition and processing of DNA lesions. UvrC both incises the 5' and 3' sides of the lesion. The N-terminal half is responsible for the 3' incision and the C-terminal half is responsible for the 5' incision. The sequence is that of UvrABC system protein C from Wolbachia sp. subsp. Brugia malayi (strain TRS).